A 174-amino-acid polypeptide reads, in one-letter code: Extracellular cysteine protease (174 aa).

Active-site residues include C24, H120, and N141.

It belongs to the peptidase C47 family. Post-translationally, proteolytically cleaved.

The protein resides in the secreted. The protein localises to the cell wall. Its activity is regulated as follows. Inhibited by heavy metal ions such as Zn(2+) or Ni(2+), iodoacetamide, N-ethylmaleimide, leupeptin, SDS and E-64. Also inhibited by chloromethylketones TPCK and TLCK and by human plasma inhibitor alpha-2-macroglobulin. Stimulated by L-cysteine. In terms of biological role, cysteine protease able to cleave elastin, insulin, myoglobin, fibronectin, fibrinogen, HMW-kininogen, alpha-1-protease inhibitor and alpha-1-antitrypsin. Along with other extracellular proteases may contribute to the colonization and infection of human tissues. The protein is Extracellular cysteine protease (ecpA) of Staphylococcus epidermidis.